Reading from the N-terminus, the 321-residue chain is Fructose-1,6-bisphosphatase class 1 (321 aa).

Mg(2+)-binding residues include Glu-93, Asp-114, Leu-116, and Asp-117. Substrate contacts are provided by residues 117-120 (DGSS), Asn-205, Tyr-233, and Lys-263. Glu-269 provides a ligand contact to Mg(2+).

Belongs to the FBPase class 1 family. As to quaternary structure, homotetramer. It depends on Mg(2+) as a cofactor.

It is found in the cytoplasm. The catalysed reaction is beta-D-fructose 1,6-bisphosphate + H2O = beta-D-fructose 6-phosphate + phosphate. It participates in carbohydrate biosynthesis; gluconeogenesis. The chain is Fructose-1,6-bisphosphatase class 1 from Persephonella marina (strain DSM 14350 / EX-H1).